A 142-amino-acid polypeptide reads, in one-letter code: AVCVSLLGASIIPPQPLDLLQFNEMIECTIPGSFPLLDYMDYGCYCGTGGRGTPVDALDRCCKEHDDCYAQIKENPKCSSLLNVPYVKQYSYTCSEGNLTCSADNDECAAFICNCDRTAALCFAEVPYKRRNFRIDYKSRCQ.

7 disulfides stabilise this stretch: C28–C94, C44–C141, C46–C62, C61–C122, C68–C115, C78–C108, and C101–C113. Ca(2+) is bound by residues Y45, G47, and G49. Residue H65 is part of the active site. D66 is a Ca(2+) binding site. D116 is a catalytic residue.

The protein belongs to the phospholipase A2 family. Group I subfamily. D49 sub-subfamily. The cofactor is Ca(2+). In terms of tissue distribution, expressed by the venom gland.

Its subcellular location is the secreted. The enzyme catalyses a 1,2-diacyl-sn-glycero-3-phosphocholine + H2O = a 1-acyl-sn-glycero-3-phosphocholine + a fatty acid + H(+). In terms of biological role, PLA2 catalyzes the calcium-dependent hydrolysis of the 2-acyl groups in 3-sn-phosphoglycerides. This chain is Acidic phospholipase A2 KBf-grIB, found in Bungarus fasciatus (Banded krait).